Here is a 370-residue protein sequence, read N- to C-terminus: Serine/threonine-protein kinase RIM11/MSD1 (370 aa).

Residues 39–322 (FPTTEVVGHG…ALQCLCSPYF (284 aa)) form the Protein kinase domain. Residues 45–53 (VGHGSFGVV) and lysine 68 contribute to the ATP site. The active-site Proton acceptor is the aspartate 164. At tyrosine 199 the chain carries Phosphotyrosine.

This sequence belongs to the protein kinase superfamily. CMGC Ser/Thr protein kinase family. GSK-3 subfamily. In terms of assembly, interacts with TDA1.

It catalyses the reaction L-seryl-[protein] + ATP = O-phospho-L-seryl-[protein] + ADP + H(+). It carries out the reaction L-threonyl-[protein] + ATP = O-phospho-L-threonyl-[protein] + ADP + H(+). Functionally, serine/threonine protein kinase that is thought to function in regulating kinetochore activity and entry into meiosis. Could phosphorylate IME1. The polypeptide is Serine/threonine-protein kinase RIM11/MSD1 (RIM11) (Saccharomyces cerevisiae (strain ATCC 204508 / S288c) (Baker's yeast)).